Here is a 351-residue protein sequence, read N- to C-terminus: UPF0252 protein MJECL39 (351 aa).

2 helical membrane passes run 58 to 78 (FITF…VWLW) and 91 to 111 (IIIC…LCGV).

This sequence belongs to the UPF0252 family.

The protein localises to the cell membrane. In Methanocaldococcus jannaschii (strain ATCC 43067 / DSM 2661 / JAL-1 / JCM 10045 / NBRC 100440) (Methanococcus jannaschii), this protein is UPF0252 protein MJECL39.